The primary structure comprises 268 residues: tRNA pseudouridine synthase A (268 aa).

Residue aspartate 54 is the Nucleophile of the active site. Tyrosine 112 is a substrate binding site.

Belongs to the tRNA pseudouridine synthase TruA family. Homodimer.

It catalyses the reaction uridine(38/39/40) in tRNA = pseudouridine(38/39/40) in tRNA. In terms of biological role, formation of pseudouridine at positions 38, 39 and 40 in the anticodon stem and loop of transfer RNAs. This chain is tRNA pseudouridine synthase A, found in Bordetella petrii (strain ATCC BAA-461 / DSM 12804 / CCUG 43448).